We begin with the raw amino-acid sequence, 695 residues long: Elongation factor G (695 aa).

One can recognise a tr-type G domain in the interval 12 to 286 (DKLRNIGIMA…AVIDYLPSPL (275 aa)). GTP-binding positions include 21-28 (AHIDAGKT), 85-89 (DTPGH), and 139-142 (NKMD).

Belongs to the TRAFAC class translation factor GTPase superfamily. Classic translation factor GTPase family. EF-G/EF-2 subfamily.

The protein localises to the cytoplasm. In terms of biological role, catalyzes the GTP-dependent ribosomal translocation step during translation elongation. During this step, the ribosome changes from the pre-translocational (PRE) to the post-translocational (POST) state as the newly formed A-site-bound peptidyl-tRNA and P-site-bound deacylated tRNA move to the P and E sites, respectively. Catalyzes the coordinated movement of the two tRNA molecules, the mRNA and conformational changes in the ribosome. This Thermotoga petrophila (strain ATCC BAA-488 / DSM 13995 / JCM 10881 / RKU-1) protein is Elongation factor G.